A 565-amino-acid polypeptide reads, in one-letter code: Protein NRT1/ PTR FAMILY 5.15 (565 aa).

A run of 2 helical transmembrane segments spans residues 49-67 and 80-100; these read FAYFGIACNLITYLTGPLG and WSGTASILPILGAFVADAYLG. Phosphothreonine is present on threonine 104. Helical transmembrane passes span 110–130, 142–162, 189–209, 217–237, 331–351, 368–388, 409–429, 454–474, 490–510, and 534–554; these read LIYILGLGLLTLSASLIIMGL, SIWVNTLFFCSLYLVAIGQGG, FFNWWFLSLSAGISISIIVVA, WAFGFGIPCLFMVMALAIFLL, IPIWITYVVSTIPYAQYITFF, IPAASLLSFVGVSILISVPLY, LQRIGAGMVLSVFNMMLAALV, IWWFVPQYLLLGMIDLFSMVG, IGLSLSLSAMGLSSFLSGFLI, and YFYWLLAAFTAIAFFAFLFIS.

This sequence belongs to the major facilitator superfamily. Proton-dependent oligopeptide transporter (POT/PTR) (TC 2.A.17) family. As to expression, expressed in shoots, roots and leaves.

The protein resides in the membrane. The chain is Protein NRT1/ PTR FAMILY 5.15 (NPF5.15) from Arabidopsis thaliana (Mouse-ear cress).